The following is a 172-amino-acid chain: MERAAKKEAVESLNGLFQTTSVAVVAHYSGLTVAQMQKLRSQMKAAGASVKVSKNRLAKIALEGTDVVAIGSLLKGPTVIATSDDPVAAPKVAVEFAKANEKFVILGGSMGKTVLNVDGVKALASLPSLDELRGKLVGLLVAPATKIAQLTTAPAAKVARVVQAYASKSEAA.

It belongs to the universal ribosomal protein uL10 family. In terms of assembly, part of the ribosomal stalk of the 50S ribosomal subunit. The N-terminus interacts with L11 and the large rRNA to form the base of the stalk. The C-terminus forms an elongated spine to which L12 dimers bind in a sequential fashion forming a multimeric L10(L12)X complex.

Functionally, forms part of the ribosomal stalk, playing a central role in the interaction of the ribosome with GTP-bound translation factors. This Rhodopseudomonas palustris (strain HaA2) protein is Large ribosomal subunit protein uL10.